The chain runs to 219 residues: MRLRSKKWAVPFIDEHPDLIIKDQRAKQLKGSWSSVFGNNHPLYLEIGSGKGQFILDNAIKYPENNFIGLELQPTAVAIAGKKAFKQEPQLANLKLILGDGGDVSDYFADNEISKIFLNHSDPWPKAKHEKRRLTAENFLKSYSKILLPNGSLELKTDNLGLFEYSLSSFKKFGLSWPEEQISYDLHHELKKNPVNIETEYEKKFAEMNQPEYWIRVNF.

S-adenosyl-L-methionine contacts are provided by glutamate 46, glutamate 71, aspartate 100, and aspartate 122. Aspartate 122 is an active-site residue. Lysine 126 contacts substrate. An interaction with RNA region spans residues 128-133 (KHEKRR). Substrate contacts are provided by residues aspartate 158 and 199-202 (TEYE).

The protein belongs to the class I-like SAM-binding methyltransferase superfamily. TrmB family.

It carries out the reaction guanosine(46) in tRNA + S-adenosyl-L-methionine = N(7)-methylguanosine(46) in tRNA + S-adenosyl-L-homocysteine. Its pathway is tRNA modification; N(7)-methylguanine-tRNA biosynthesis. Functionally, catalyzes the formation of N(7)-methylguanine at position 46 (m7G46) in tRNA. This Oenococcus oeni (strain ATCC BAA-331 / PSU-1) protein is tRNA (guanine-N(7)-)-methyltransferase.